A 1190-amino-acid chain; its full sequence is MTSRFGKTYSRKGGNGSSKFDEVFSNKRTTLSTKWGETTFMAKLGQKRPNFKPDIQEIPKKPKVEEESTGDPFGFDSDDESLPVSSKNLAQVKCSSYSESSEAAQLEEVTSVLEANSKISHVVVEDTVVSDKCFPLEDTLLGKEKSTNRIVEDDASISSCNKLITSDKVENFHEEHEKNSHHIHKNADDSTKKPNAETTVASEIKETNDTWNSQFGKRPESPSEISPIKGSVRTGLFEWDNDFEDIRSEDCILSLDSDPLLEMKDDDFKNRLENLNEAIEEDIVQSVLRPTNCRTYCRANKTKSSQGASNFDKLMDGTSQALAKANSESSKDGLNQAKKGGVSCGTSFRGTVGRTRDYTVLHPSCLSVCNVTIQDTMERSMDEFTASTPADLGEAGRLRKKADIATSKTTTRFRPSNTKSKKDVKLEFFGFEDHETGGDEGGSGSSNYKIKYFGFDDLSESEDDEDDDCQVERKTSKKRTKTAPSPSLQPPPESNDNSQDSQSGTNNAENLDFTEDLPGVPESVKKPINKQGDKSKENTRKIFSGPKRSPTKAVYNARHWNHPDSEELPGPPVVKPQSVTVRLSSKEPNQKDDGVFKAPAPPSKVIKTVTIPTQPYQDIVTALKCRREDKELYTVVQHVKHFNDVVEFGENQEFTDDIEYLLSGLKSTQPLNTRCLSVISLATKCAMPSFRMHLRAHGMVAMVFKTLDDSQHHQNLSLCTAALMYILSRDRLNMDLDRASLDLMIRLLELEQDASSAKLLNEKDMNKIKEKIRRLCETVHNKHLDLENITTGHLAMETLLSLTSKRAGDWFKEELRLLGGLDHIVDKVKECVDHLSRDEDEEKLVASLWGAERCLRVLESVTVHNPENQSYLIAYKDSQLIVSSAKALQHCEELIQQYNRAEDSICLADSKPLPHQNVTNHVGKAVEDCMRAIIGVLLNLTNDNEWGSTKTGEQDGLIGTALNCVLQVPKYLPQEQRFDIRVLGLGLLINLVEYSARNRHCLVNMETSCSFDSSICSGEGDDSLRIGGQVHAVQALVQLFLERERAAQLAESKTDELIKDAPTTQHDKSGEWQETSGEIQWVSTEKTDGTEEKHKKEEEDEELDLNKALQHAGKHMEDCIVASYTALLLGCLCQESPINVTTVREYLPEGDFSIMTEMLKKFLSFMNLTCAVGTTGQKSISRVIEYLEHC.

Disordered stretches follow at residues Met1 to Val23 and Gln46 to Leu82. Positions Met1–Glu659 are mediates interaction with the cohesin complex. Positions Asp54–Glu66 are enriched in basic and acidic residues. The FGF motif 1 motif lies at Phe73–Phe75. Ser77 carries the post-translational modification Phosphoserine. Position 168 is an N6-acetyllysine (Lys168). Phosphoserine occurs at positions 221, 223, and 226. Positions Leu260 to Ser286 form a coiled coil. Phosphoserine occurs at positions 347 and 380. The FGF motif 2 motif lies at Phe429–Phe431. At Ser443 the chain carries Phosphoserine. The FGF motif 3 signature appears at Phe453–Phe455. 2 positions are modified to phosphoserine: Ser459 and Ser461. Residues Ser459–Cys469 are compositionally biased toward acidic residues. The tract at residues Ser459–Ala553 is disordered. The span at Ser494 to Glu509 shows a compositional bias: polar residues. Basic and acidic residues predominate over residues Gln531–Arg540. The 544-residue stretch at Arg626–Thr1169 folds into the WAPL domain. A coiled-coil region spans residues Glu749–Lys782. Ser904 is modified (phosphoserine).

This sequence belongs to the WAPL family. In terms of assembly, interacts with the cohesin complex throughout the cell cycle; interacts with both chromatin-bound and soluble pools of the complex. Interacts with RAD21; the interaction is direct. Interacts with PDS5A; the interaction is direct, cohesin-dependent and competitive with CDCA5/SORORIN. Interacts (via FGF motifs) with PDS5B; the interaction is direct. Interacts with a SMC1 protein (SMC1A or SMC1B) and SMC3. As to quaternary structure, (Microbial infection) Isoform 2 interacts with Epstein-Barr virus EBNA2. Post-translationally, deubiquitinated by USP37; leading to stabilization. In terms of tissue distribution, isoform 1 is highly expressed in uterine cervix tumor. Isoform 2 is widely expressed with a high level in skeletal muscle and heart.

Its subcellular location is the nucleus. It is found in the chromosome. The protein resides in the cytoplasm. Its function is as follows. Regulator of sister chromatid cohesion in mitosis which negatively regulates cohesin association with chromatin. Involved in both sister chromatid cohesion during interphase and sister-chromatid resolution during early stages of mitosis. Couples DNA replication to sister chromatid cohesion. Cohesion ensures that chromosome partitioning is accurate in both meiotic and mitotic cells and plays an important role in DNA repair. This chain is Wings apart-like protein homolog, found in Homo sapiens (Human).